The chain runs to 589 residues: Protein PAF1 homolog (589 aa).

A compositionally biased stretch (pro residues) spans 1-54; sequence MASYRPPYPPLPQPPSQNSLAPPPPPPSLPPPVPPPPPSHQPYSYPPPPPPPPH. Disordered stretches follow at residues 1-180 and 542-589; these read MASY…PLLT and GVYS…DYSE. The span at 55–65 shows a compositional bias: low complexity; the sequence is AYYQQGPHYPQ. Pro residues predominate over residues 71-87; sequence APPPPPPPSAPPPLVPD. The segment covering 88–116 has biased composition (basic and acidic residues); it reads PPRHQGPNDHEKGASKQVGRRERAKPDPS. The span at 117–127 shows a compositional bias: basic residues; sequence KHHHRSHLPHS. Residues 126 to 159 adopt a coiled-coil conformation; the sequence is HSKKIETEEERRLRKKRELEKQRQDEKHRQQMKN. The segment covering 128-154 has biased composition (basic and acidic residues); the sequence is KKIETEEERRLRKKRELEKQRQDEKHR.

This sequence belongs to the PAF1 family. In terms of assembly, component of the nuclear PAF1 complex (PAF1C), which consists of VIP2/ELF7/PAF1, VIP3/SKI8/WDR61, VIP4/LEO1, VIP5/RTF1, VIP6/ELF8/CTR9 and CDC73. Expressed in roots, leaves and shoot apex.

It is found in the nucleus. Its function is as follows. Component of the PAF1 complex (PAF1C) which is involved in histone modifications such as methylation on histone H3 'Lys-4' (H3K4me3). Involved in regulation of flowering time. Required for the expression of the flowering repressors and MAD-box genes FLC, AGL27/FLM and AGL31/MAF2. Required for histone H3 trimethylation on 'Lys-4' H3K4me3 at the FLC and AGL27/FLM loci. Involved in the control of seed dormancy and germination. The chain is Protein PAF1 homolog from Arabidopsis thaliana (Mouse-ear cress).